The primary structure comprises 145 residues: Large ribosomal subunit protein uL14m (145 aa).

The transit peptide at 1–30 (MAFSSGLWGPCVHMSRAFSQRCFSTTGSLG) directs the protein to the mitochondrion.

It belongs to the universal ribosomal protein uL14 family. Component of the mitochondrial ribosome large subunit (39S) which comprises a 16S rRNA and about 50 distinct proteins. Interacts with MALSU1.

The protein localises to the mitochondrion. Its function is as follows. May form part of 2 intersubunit bridges in the assembled ribosome. Upon binding to MALSU1, intersubunit bridge formation is blocked, preventing ribosome formation and repressing translation. This chain is Large ribosomal subunit protein uL14m (MRPL14), found in Bos taurus (Bovine).